The chain runs to 532 residues: Flavin-containing monooxygenase 1 (532 aa).

Over 1-510 (MVKRVAIVGA…TRTIQESPSS (510 aa)) the chain is Lumenal. FAD-binding positions include 9–13 (GAGVS), E32, 40–41 (LW), and 61–62 (NS). Residues 60–61 (SN) and 195–198 (SGTD) contribute to the NADP(+) site. Residues 511-531 (FETLLKLFSFLALLIAVFLIF) traverse the membrane as a helical segment. Position 532 (L532) is a topological domain, cytoplasmic.

It belongs to the FMO family. Requires FAD as cofactor. As to expression, liver.

The protein resides in the endoplasmic reticulum membrane. The enzyme catalyses hypotaurine + NADPH + O2 + H(+) = taurine + NADP(+) + H2O. It carries out the reaction hypotaurine + NADH + O2 + H(+) = taurine + NAD(+) + H2O. The catalysed reaction is trimethylamine + NADPH + O2 = trimethylamine N-oxide + NADP(+) + H2O. It catalyses the reaction N,N-dimethylaniline + NADPH + O2 + H(+) = N,N-dimethylaniline N-oxide + NADP(+) + H2O. Broad spectrum monooxygenase that catalyzes the oxygenation of a wide variety of nitrogen- and sulfur-containing compounds including xenobiotics. Catalyzes the S-oxygenation of hypotaurine to produce taurine, an organic osmolyte involved in cell volume regulation as well as a variety of cytoprotective and developmental processes. In vitro, catalyzes the N-oxygenation of trimethylamine (TMA) to produce trimethylamine N-oxide (TMAO) and could therefore participate to the detoxification of this compound that is generated by the action of gut microbiota from dietary precursors such as choline, choline containing compounds, betaine or L-carnitine. The polypeptide is Flavin-containing monooxygenase 1 (Mus musculus (Mouse)).